A 300-amino-acid chain; its full sequence is Zinc finger CCCH domain-containing protein 14 (300 aa).

The interval 1–38 (MEVGGRKRGKPDGANGAGGKRARESESFQTGVGSKSKP) is disordered. 2 consecutive C3H1-type zinc fingers follow at residues 33–61 (GSKS…HHFP) and 99–127 (TVKT…HGER). Positions 170-234 (SATAKISVDA…DQIKNASAMV (65 aa)) constitute a KH domain. The segment at 243-262 (GGAPPQGKKPVGGSHRGGGP) is disordered. The segment at 265–292 (NFKTKLCENFTKGSCTFGDRCHFAHGEN) adopts a C3H1-type 3 zinc-finger fold.

In Oryza sativa subsp. japonica (Rice), this protein is Zinc finger CCCH domain-containing protein 14.